Consider the following 567-residue polypeptide: MKPVWVATLLWMLLLVPRLGAARKGSPEEASFYYGTFPLGFSWGVGSSAYQTEGAWDQDGKGPSIWDVFTHSGKGKVLGNETADVACDGYYKVQEDIILLRELHVNHYRFSLSWPRLLPTGIRAEQVNKKGIEFYSDLIDALLSSNITPIVTLHHWDLPQLLQVKYGGWQNVSMANYFRDYANLCFEAFGDRVKHWITFSDPRAMAEKGYETGHHAPGLKLRGTGLYKAAHHIIKAHAKAWHSYNTTWRSKQQGLVGISLNCDWGEPVDISNPKDLEAAERYLQFCLGWFANPIYAGDYPQVMKDYIGRKSAEQGLEMSRLPVFSLQEKSYIKGTSDFLGLGHFTTRYITERNYPSRQGPSYQNDRDLIELVDPNWPDLGSKWLYSVPWGFRRLLNFAQTQYGDPPIYVMENGASQKFHCTQLCDEWRIQYLKGYINEMLKAIKDGANIKGYTSWSLLDKFEWEKGYSDRYGFYYVEFNDRNKPRYPKASVQYYKKIIIANGFPNPREVESWYLKALETCSINNQMLAAEPLLSHMQMVTEIVVPTVCSLCVLITAVLLMLLLRRQS.

A signal peptide spans 1-21 (MKPVWVATLLWMLLLVPRLGA). Residues 23–541 (RKGSPEEASF…LLSHMQMVTE (519 aa)) lie on the Extracellular side of the membrane. Asn-80, Asn-171, and Asn-245 each carry an N-linked (GlcNAc...) asparagine glycan. Residues 542 to 562 (IVVPTVCSLCVLITAVLLMLL) form a helical membrane-spanning segment. Over 563–567 (LRRQS) the chain is Cytoplasmic.

Belongs to the glycosyl hydrolase 1 family. Klotho subfamily. May form dimers.

The protein localises to the endoplasmic reticulum membrane. In terms of biological role, plays a role in formation of the lens suture in the eye, which is important for normal optical properties of the lens. The chain is Lactase-like protein (LCTL) from Homo sapiens (Human).